Reading from the N-terminus, the 498-residue chain is Lysine--tRNA ligase (498 aa).

Mg(2+) is bound by residues E408 and E415.

It belongs to the class-II aminoacyl-tRNA synthetase family. Homodimer. Mg(2+) is required as a cofactor.

The protein localises to the cytoplasm. It catalyses the reaction tRNA(Lys) + L-lysine + ATP = L-lysyl-tRNA(Lys) + AMP + diphosphate. This Pediococcus pentosaceus (strain ATCC 25745 / CCUG 21536 / LMG 10740 / 183-1w) protein is Lysine--tRNA ligase.